A 300-amino-acid chain; its full sequence is UDP-N-acetylenolpyruvoylglucosamine reductase (300 aa).

An FAD-binding PCMH-type domain is found at 30 to 194 (KVGGAADFFV…VGATFRLDPA (165 aa)). Arg174 is a catalytic residue. Residue Ser223 is the Proton donor of the active site. Glu293 is an active-site residue.

Belongs to the MurB family. It depends on FAD as a cofactor.

It is found in the cytoplasm. It catalyses the reaction UDP-N-acetyl-alpha-D-muramate + NADP(+) = UDP-N-acetyl-3-O-(1-carboxyvinyl)-alpha-D-glucosamine + NADPH + H(+). The protein operates within cell wall biogenesis; peptidoglycan biosynthesis. In terms of biological role, cell wall formation. In Geobacter metallireducens (strain ATCC 53774 / DSM 7210 / GS-15), this protein is UDP-N-acetylenolpyruvoylglucosamine reductase.